Reading from the N-terminus, the 203-residue chain is MSIKYVATSKLPTPWGVFAMHGFEDTETGKEHVALTFGTLNSDAPVLGRIHSECLTGDALFSLRCDCGFQLQTAMQNIAETGSGFILYLRQEGRGIGLLNKIRAYELQDKGANTVEANEQLGFPADMRKYDMIQPMLEQIGVKHVRLMTNNPRKVKAMKEIGIEVVERVPLQVGKNRYNEAYLKTKSTELGHMMSEYHFTDEE.

GTP is bound at residue 49 to 53 (RIHSE). Cys54, Cys65, and Cys67 together coordinate Zn(2+). Residues Gln70, 92–94 (EGR), and Thr114 contribute to the GTP site. The active-site Proton acceptor is Asp126. Arg128 (nucleophile) is an active-site residue. Positions 149 and 154 each coordinate GTP.

Belongs to the GTP cyclohydrolase II family. Zn(2+) serves as cofactor.

It carries out the reaction GTP + 4 H2O = 2,5-diamino-6-hydroxy-4-(5-phosphoribosylamino)-pyrimidine + formate + 2 phosphate + 3 H(+). It functions in the pathway cofactor biosynthesis; riboflavin biosynthesis; 5-amino-6-(D-ribitylamino)uracil from GTP: step 1/4. Its function is as follows. Catalyzes the conversion of GTP to 2,5-diamino-6-ribosylamino-4(3H)-pyrimidinone 5'-phosphate (DARP), formate and pyrophosphate. This Shewanella sp. (strain MR-7) protein is GTP cyclohydrolase-2.